The sequence spans 536 residues: Protein ST7 homolog (536 aa).

A run of 2 helical transmembrane segments spans residues 3 to 23 and 49 to 69; these read CSWT…LFFL and FYVA…IFEW. Residues 192–219 adopt a coiled-coil conformation; sequence AEEDTETVAQAENVLRRALRAIENTLST. Residues 464–484 traverse the membrane as a helical segment; it reads STLGMLIQTFACLAICILAVL.

The protein belongs to the ST7 family.

Its subcellular location is the membrane. This Caenorhabditis briggsae protein is Protein ST7 homolog.